A 115-amino-acid chain; its full sequence is NAD(P)H-quinone oxidoreductase subunit M (115 aa).

Belongs to the complex I NdhM subunit family. As to quaternary structure, NDH-1 can be composed of about 15 different subunits; different subcomplexes with different compositions have been identified which probably have different functions.

The protein resides in the cellular thylakoid membrane. It carries out the reaction a plastoquinone + NADH + (n+1) H(+)(in) = a plastoquinol + NAD(+) + n H(+)(out). The catalysed reaction is a plastoquinone + NADPH + (n+1) H(+)(in) = a plastoquinol + NADP(+) + n H(+)(out). In terms of biological role, NDH-1 shuttles electrons from an unknown electron donor, via FMN and iron-sulfur (Fe-S) centers, to quinones in the respiratory and/or the photosynthetic chain. The immediate electron acceptor for the enzyme in this species is believed to be plastoquinone. Couples the redox reaction to proton translocation, and thus conserves the redox energy in a proton gradient. Cyanobacterial NDH-1 also plays a role in inorganic carbon-concentration. The sequence is that of NAD(P)H-quinone oxidoreductase subunit M from Prochlorococcus marinus (strain MIT 9303).